The following is a 298-amino-acid chain: Tritrans,polycis-undecaprenyl-diphosphate synthase (geranylgeranyl-diphosphate specific) (298 aa).

The active site involves Asp35. Asp35 is a Mg(2+) binding site. Substrate is bound by residues 36–39 (GNRR), Arg48, His52, and 80–82 (STE). The active-site Proton acceptor is the Asn83. Substrate contacts are provided by residues Phe84, Arg86, Arg208, and 214 to 216 (RIS).

Belongs to the UPP synthase family. In terms of assembly, homodimer. Requires Mg(2+) as cofactor.

It carries out the reaction geranylgeranyl diphosphate + 7 isopentenyl diphosphate = tri-trans,hepta-cis-undecaprenyl diphosphate + 7 diphosphate. Functionally, catalyzes the sequential condensation of isopentenyl diphosphate (IPP) with geranylgeranyl diphosphate (GGPP) to yield (2Z,6Z,10Z,14Z,18Z,22Z,26Z,30E,34E,38E)-undecaprenyl diphosphate (tritrans,heptacis-UPP). It is probably the precursor of glycosyl carrier lipids. The sequence is that of Tritrans,polycis-undecaprenyl-diphosphate synthase (geranylgeranyl-diphosphate specific) from Methanosarcina mazei (strain ATCC BAA-159 / DSM 3647 / Goe1 / Go1 / JCM 11833 / OCM 88) (Methanosarcina frisia).